Consider the following 245-residue polypeptide: MKIDILSIFPDMFSGVTGNSIIKKAIENERVEVEVTDFREYAEGKHHIVDDYPYGGGAGMLLKAQPIFDAVQAVKEKQPETKPRVILMDPAGKRFDQKMAEEFAEEEHLVFICGHYEGYDERIREHLVTDEVSIGDYILTGGEIGAMIVMDSVIRLLPGVLGNKDSAVTDSFSTGLLEHPHYTRPADFRGMKVPDILLSGNHAWIEEWRDKESLKRTYERRPDLLKNYPLTDKQKTWLKEWSDSK.

S-adenosyl-L-methionine is bound by residues Gly114 and 134-139; that span reads IGDYIL.

This sequence belongs to the RNA methyltransferase TrmD family. Homodimer.

The protein resides in the cytoplasm. The enzyme catalyses guanosine(37) in tRNA + S-adenosyl-L-methionine = N(1)-methylguanosine(37) in tRNA + S-adenosyl-L-homocysteine + H(+). Functionally, specifically methylates guanosine-37 in various tRNAs. This is tRNA (guanine-N(1)-)-methyltransferase from Listeria welshimeri serovar 6b (strain ATCC 35897 / DSM 20650 / CCUG 15529 / CIP 8149 / NCTC 11857 / SLCC 5334 / V8).